The sequence spans 935 residues: Protein translocase subunit SecA (935 aa).

ATP is bound by residues Gln90, 108 to 112 (GEGKT), and Asp504. The interval 543 to 568 (GGRRPQGFGTSKKKGKNWSPSDADIF) is disordered.

The protein belongs to the SecA family. In terms of assembly, monomer and homodimer. Part of the essential Sec protein translocation apparatus which comprises SecA, SecYEG and auxiliary proteins SecDF. Other proteins may also be involved.

Its subcellular location is the cell inner membrane. It localises to the cellular thylakoid membrane. The protein localises to the cytoplasm. The catalysed reaction is ATP + H2O + cellular proteinSide 1 = ADP + phosphate + cellular proteinSide 2.. In terms of biological role, part of the Sec protein translocase complex. Interacts with the SecYEG preprotein conducting channel. Has a central role in coupling the hydrolysis of ATP to the transfer of proteins into and across the cell membrane, serving as an ATP-driven molecular motor driving the stepwise translocation of polypeptide chains across the membrane. Functionally, probably participates in protein translocation into and across both the cytoplasmic and thylakoid membranes in cyanobacterial cells. The sequence is that of Protein translocase subunit SecA from Rippkaea orientalis (strain PCC 8801 / RF-1) (Cyanothece sp. (strain PCC 8801)).